Consider the following 151-residue polypeptide: UPF0178 protein Pfl01_5469 (151 aa).

This sequence belongs to the UPF0178 family.

This Pseudomonas fluorescens (strain Pf0-1) protein is UPF0178 protein Pfl01_5469.